Here is a 369-residue protein sequence, read N- to C-terminus: Tyrosinase-like protein orsC (369 aa).

Positions 1–23 (MLAFNPLVTALAALIFLFCQANA) are cleaved as a signal peptide. Cu cation contacts are provided by H112 and H121. N165, N179, N253, and N272 each carry an N-linked (GlcNAc...) asparagine glycan. Position 315 (H315) interacts with Cu cation.

It participates in secondary metabolite biosynthesis. In terms of biological role, tyrosinase-like protein; part of the gene cluster that mediates the biosynthesis of orsellinic acid, as well as of the cathepsin K inhibitors F9775 A and F9775 B. The non-reducing polyketide synthase orsA produces orsellinic acid by condensing acetyl-CoA with 3 malonyl-CoA units. Further modifications by the decarboxylase orsB and the tyrosinase-like protein orsC lead to the production of F9775 A and F9775 B. The functions of orsD and orsE remain unclear since only orsB and orsC are required to convert orsellinic acid into F9775 A and F9775 B. The polypeptide is Tyrosinase-like protein orsC (Emericella nidulans (strain FGSC A4 / ATCC 38163 / CBS 112.46 / NRRL 194 / M139) (Aspergillus nidulans)).